The primary structure comprises 355 residues: Methyltransferase FUS9 (355 aa).

The S-adenosyl-L-homocysteine site is built by Tyr-18, Asn-63, Asp-86, Ser-123, and Phe-124. Phe-231 serves as a coordination point for Mg(2+).

Belongs to the methyltransferase superfamily. Type-7 methyltransferase family. Requires Mg(2+) as cofactor.

It functions in the pathway mycotoxin biosynthesis. Methyltransferase; part of the gene cluster that mediates the biosynthesis of the mycotoxin fusarin C. Within the cluster, FUS1, FUS2, FUS8 and FUS9 are sufficient for fusarin production. The roles of the other FUS members are yet undetermined. The fusarin C synthetase FUS1 is responsible for the condensation of one acetyl-coenzyme A (CoA) unit with six malonyl-CoA units and the amide linkage of the arising heptaketide and homoserine, subsequently releasing the first intermediate, prefusarin, as an alcohol with an open ring structure. The cytochrome P450 monooxygenase FUS8 participates in multiple oxidation processes at carbon C-20 and is able to use the FUS1 product as substrate, resulting in formation of 20-hydroxy-prefusarin. This reaction seems to be essential before the 2-pyrrolidone ring closure can be catalyzed by FUS2, generating 20-hydroxy-fusarin. FUS8 is able to further oxidizes carbon C-20 after ring closure, resulting in the formation of carboxy-fusarin C. As the last step, FUS9 methylates the hydroxyl group at C-21 to generate fusarin C. Fusarin C can then rearrange to epi-fusarin C, the (z)-isomers, and fusarin A and fusarin D. The chain is Methyltransferase FUS9 from Gibberella moniliformis (strain M3125 / FGSC 7600) (Maize ear and stalk rot fungus).